We begin with the raw amino-acid sequence, 398 residues long: Meiosis-specific protein SPO11 (398 aa).

The Topo IIA-type catalytic domain maps to 40–175 (CSNADVLAHI…LNIIPAQKGL (136 aa)). Residue Tyr-135 is the O-(5'-phospho-DNA)-tyrosine intermediate of the active site. Glu-233 and Asp-288 together coordinate Mg(2+).

Belongs to the TOP6A family. Requires Mg(2+) as cofactor.

It localises to the nucleus. The protein localises to the chromosome. It carries out the reaction ATP-dependent breakage, passage and rejoining of double-stranded DNA.. Functionally, required for meiotic recombination. Mediates DNA cleavage that forms the double-strand breaks (DSB) that initiate meiotic recombination. The action of SPO11 is important in setting off a regulatory chain of events encompassing 5' to 3' resection. When there are no SPO11-DSBs, resection of a site specific VDE-DSB takes place but it is faster than in wild-type meiosis and increases the risk of uncovering flanking homology. This Saccharomyces cerevisiae (strain ATCC 204508 / S288c) (Baker's yeast) protein is Meiosis-specific protein SPO11 (SPO11).